The sequence spans 688 residues: Protein SDA1 homolog (688 aa).

Phosphoserine occurs at positions 232, 234, and 236. The stretch at 254–318 forms a coiled coil; the sequence is KKSSKNKKKL…ERFEVKMMLM (65 aa). Residues 484 to 498 are compositionally biased toward acidic residues; that stretch reads VENEEENAEGDEDGW. The tract at residues 484–524 is disordered; sequence VENEEENAEGDEDGWESASLSDEADSDGEWVDVHHSSDEEQ. Residues 514–524 show a composition bias toward basic and acidic residues; that stretch reads VDVHHSSDEEQ. Ser586 and Ser596 each carry phosphoserine. The segment at 605-688 is disordered; that stretch reads KKPKSDKETR…ALLKKRKRMK (84 aa). Over residues 668–681 the composition is skewed to basic and acidic residues; sequence SFREKQLALRDALL.

The protein belongs to the SDA1 family.

The protein resides in the nucleus. It is found in the nucleolus. In terms of biological role, required for 60S pre-ribosomal subunits export to the cytoplasm. The sequence is that of Protein SDA1 homolog (SDAD1) from Bos taurus (Bovine).